Consider the following 375-residue polypeptide: Fluoride export protein 2 (375 aa).

Residues M1 to K11 lie on the Cytoplasmic side of the membrane. A helical membrane pass occupies residues L12–T32. Residues R33–Q34 are Extracellular-facing. A helical membrane pass occupies residues A35–S55. Residues N56–Q79 lie on the Cytoplasmic side of the membrane. The chain crosses the membrane as a helical span at residues V80–L100. Topologically, residues L101–G127 are extracellular. N109 and N117 each carry an N-linked (GlcNAc...) asparagine glycan. Residues I128–F148 traverse the membrane as a helical segment. Over G149–K213 the chain is Cytoplasmic. A helical transmembrane segment spans residues L214–E234. An N-linked (GlcNAc...) asparagine glycan is attached at N235. At N235–W241 the chain is on the extracellular side. Residues T242 to F262 form a helical membrane-spanning segment. Over N263–K268 the chain is Cytoplasmic. The helical transmembrane segment at F269–M289 threads the bilayer. The Extracellular portion of the chain corresponds to V290 to C310. Residues H311–I331 traverse the membrane as a helical segment. Over N332–S338 the chain is Cytoplasmic. A helical transmembrane segment spans residues F339 to I359. Over T360–C375 the chain is Extracellular.

This sequence belongs to the fluoride channel Fluc/FEX (TC 1.A.43) family.

It is found in the cell membrane. The catalysed reaction is fluoride(in) = fluoride(out). Functionally, fluoride channel required for the rapid expulsion of cytoplasmic fluoride. The chain is Fluoride export protein 2 from Saccharomyces cerevisiae (strain ATCC 204508 / S288c) (Baker's yeast).